A 276-amino-acid polypeptide reads, in one-letter code: Ribonuclease 3 (276 aa).

Residues 30–161 (LTAFIRSLFK…LTGAIYLDRG (132 aa)) enclose the RNase III domain. Residue Glu74 participates in Mg(2+) binding. Asp78 is an active-site residue. Residues Asp147 and Glu150 each coordinate Mg(2+). Residue Glu150 is part of the active site. The DRBM domain occupies 188–257 (NHKSRLIEHT…AEEAMGALER (70 aa)).

The protein belongs to the ribonuclease III family. In terms of assembly, homodimer. Mg(2+) serves as cofactor.

The protein resides in the cytoplasm. The catalysed reaction is Endonucleolytic cleavage to 5'-phosphomonoester.. Digests double-stranded RNA. Involved in the processing of primary rRNA transcript to yield the immediate precursors to the large and small rRNAs (23S and 16S). Processes some mRNAs, and tRNAs when they are encoded in the rRNA operon. Processes pre-crRNA and tracrRNA of type II CRISPR loci if present in the organism. The chain is Ribonuclease 3 from Chlorobium luteolum (strain DSM 273 / BCRC 81028 / 2530) (Pelodictyon luteolum).